Consider the following 105-residue polypeptide: UPF0145 protein GK1405 (105 aa).

This sequence belongs to the UPF0145 family.

This chain is UPF0145 protein GK1405, found in Geobacillus kaustophilus (strain HTA426).